A 483-amino-acid polypeptide reads, in one-letter code: Trimethylamine methyltransferase MttB (483 aa).

O334 is a non-standard amino acid (pyrrolysine).

It belongs to the trimethylamine methyltransferase family. Can form a complex with MttC.

The catalysed reaction is Co(I)-[trimethylamine-specific corrinoid protein] + trimethylamine + H(+) = methyl-Co(III)-[trimethylamine-specific corrinoid protein] + dimethylamine. The protein operates within one-carbon metabolism; methanogenesis from trimethylamine. Its function is as follows. Catalyzes the transfer of a methyl group from trimethylamine to the corrinoid cofactor of MttC. This Methanosarcina thermophila protein is Trimethylamine methyltransferase MttB (mttB).